The following is a 319-amino-acid chain: Inositol phosphoceramide mannosyltransferase 1 (319 aa).

A helical membrane pass occupies residues 8–28 (LLLKGIPICGVILLILWGYSL). Asparagine 115 and asparagine 198 each carry an N-linked (GlcNAc...) asparagine glycan. 2 helical membrane-spanning segments follow: residues 211-231 (PTVFLSAGPLFLSYQFCKYLL) and 279-299 (VLFFAFLAAFAILFLCLRVVF).

This sequence belongs to the glycosyltransferase 32 family.

The protein localises to the golgi apparatus. It is found in the cis-Golgi network membrane. Its subcellular location is the trans-Golgi network membrane. With imt2 and imt3, is required for the synthesis of mannosyl phosphorylinositol ceramide (MIPC). Catalyzes the addition of mannosyl to phosphorylinositol ceramide (IPC). MIPC is essential for cell morphology, cell-surface distribution of ergosterol, localization for plasma-membrane transporters, and lipid-raft-mediated endocytosis of plasma membrane proteins to the vacuole. This is Inositol phosphoceramide mannosyltransferase 1 (imt1) from Schizosaccharomyces pombe (strain 972 / ATCC 24843) (Fission yeast).